A 600-amino-acid chain; its full sequence is NADH-quinone oxidoreductase subunit C/D (600 aa).

Positions 1 to 190 (MVNNMTDLTA…DPFELTKAKQ (190 aa)) are NADH dehydrogenase I subunit C. The segment at 214–600 (DFMFLNLGPN…IDFVMSDVDR (387 aa)) is NADH dehydrogenase I subunit D.

It in the N-terminal section; belongs to the complex I 30 kDa subunit family. This sequence in the C-terminal section; belongs to the complex I 49 kDa subunit family. NDH-1 is composed of 13 different subunits. Subunits NuoB, CD, E, F, and G constitute the peripheral sector of the complex.

It is found in the cell inner membrane. The enzyme catalyses a quinone + NADH + 5 H(+)(in) = a quinol + NAD(+) + 4 H(+)(out). In terms of biological role, NDH-1 shuttles electrons from NADH, via FMN and iron-sulfur (Fe-S) centers, to quinones in the respiratory chain. The immediate electron acceptor for the enzyme in this species is believed to be ubiquinone. Couples the redox reaction to proton translocation (for every two electrons transferred, four hydrogen ions are translocated across the cytoplasmic membrane), and thus conserves the redox energy in a proton gradient. This Salmonella paratyphi C (strain RKS4594) protein is NADH-quinone oxidoreductase subunit C/D.